A 203-amino-acid chain; its full sequence is Large ribosomal subunit protein bL25 (203 aa).

It belongs to the bacterial ribosomal protein bL25 family. CTC subfamily. In terms of assembly, part of the 50S ribosomal subunit; part of the 5S rRNA/L5/L18/L25 subcomplex. Contacts the 5S rRNA. Binds to the 5S rRNA independently of L5 and L18.

This is one of the proteins that binds to the 5S RNA in the ribosome where it forms part of the central protuberance. This Pseudomonas savastanoi pv. phaseolicola (strain 1448A / Race 6) (Pseudomonas syringae pv. phaseolicola (strain 1448A / Race 6)) protein is Large ribosomal subunit protein bL25.